The chain runs to 670 residues: MNQSVHQRMQELEQLLNRYNQEYYENDEPSVPDAEYDRLFRELKTLETEHPDLKSAQSPTMKVGGKPLGQFRSVEHEVPMLSLDNAFSVDEFEAFSKRVEQRLDTNQTVTFCCEPKLDGAAVSLLYENGLLVRGATRGDGQSGEDITENVKTIRNVPLKLSGDVPERLEVRGEVVMPLGAFERFNEQARQREEKVFANPRNAAAGSLRQLDSRITAKRPLHFYAYSLGLISETTQLPDSHHQRLLQLKDWGLPVNIEIKTVDSVQGCDDYYEAILARRDTLNYDIDGVVFKVDSIRLQQDLGFVARAPRWAIARKFPAQEQLTTITGVDFQVGRTGAITPVARLEPVNVGGVTVSNATLHNADEIERLGVRIGDCVSIRRAGDVIPQVVSVIKDKRPENTKAIEFPQHCPICQSDIERVEGEAVARCTGGLYCAAQRKEAIKHFASRKAMDIDGLGDKIVEQLVERDWIKSPADLYRLSKAELATLPRMGAKSAENLRNAIKATQETTLARFIYALGIREVGEATANALANHFKNLDALIAAESEQLQEVPDVGAVVAKHIVAFFHEAHNQQVVAELREFISWPEGEEASSVQSDRLSGNTYVITGTLSTMTRDEAKSALEALGAKVASSVSKKTTALVAGENAGSKLTKAQSLGLDILDENALAELLSD.

NAD(+) contacts are provided by residues 33–37, 82–83, and Glu-114; these read DAEYD and SL. The active-site N6-AMP-lysine intermediate is the Lys-116. 4 residues coordinate NAD(+): Arg-137, Glu-173, Lys-291, and Lys-315. Positions 409, 412, 427, and 433 each coordinate Zn(2+). Positions 592-670 constitute a BRCT domain; sequence VQSDRLSGNT…ENALAELLSD (79 aa).

Belongs to the NAD-dependent DNA ligase family. LigA subfamily. The cofactor is Mg(2+). It depends on Mn(2+) as a cofactor.

The enzyme catalyses NAD(+) + (deoxyribonucleotide)n-3'-hydroxyl + 5'-phospho-(deoxyribonucleotide)m = (deoxyribonucleotide)n+m + AMP + beta-nicotinamide D-nucleotide.. DNA ligase that catalyzes the formation of phosphodiester linkages between 5'-phosphoryl and 3'-hydroxyl groups in double-stranded DNA using NAD as a coenzyme and as the energy source for the reaction. It is essential for DNA replication and repair of damaged DNA. The sequence is that of DNA ligase from Idiomarina loihiensis (strain ATCC BAA-735 / DSM 15497 / L2-TR).